The following is an 872-amino-acid chain: Alanine--tRNA ligase (872 aa).

Zn(2+)-binding residues include His567, His571, Cys669, and His673.

The protein belongs to the class-II aminoacyl-tRNA synthetase family. Requires Zn(2+) as cofactor.

Its subcellular location is the cytoplasm. It catalyses the reaction tRNA(Ala) + L-alanine + ATP = L-alanyl-tRNA(Ala) + AMP + diphosphate. Catalyzes the attachment of alanine to tRNA(Ala) in a two-step reaction: alanine is first activated by ATP to form Ala-AMP and then transferred to the acceptor end of tRNA(Ala). Also edits incorrectly charged Ser-tRNA(Ala) and Gly-tRNA(Ala) via its editing domain. The protein is Alanine--tRNA ligase of Streptococcus pyogenes serotype M6 (strain ATCC BAA-946 / MGAS10394).